The sequence spans 201 residues: Imidazoleglycerol-phosphate dehydratase (201 aa).

The protein belongs to the imidazoleglycerol-phosphate dehydratase family.

It is found in the cytoplasm. The enzyme catalyses D-erythro-1-(imidazol-4-yl)glycerol 3-phosphate = 3-(imidazol-4-yl)-2-oxopropyl phosphate + H2O. It participates in amino-acid biosynthesis; L-histidine biosynthesis; L-histidine from 5-phospho-alpha-D-ribose 1-diphosphate: step 6/9. The chain is Imidazoleglycerol-phosphate dehydratase from Synechococcus sp. (strain CC9311).